A 306-amino-acid polypeptide reads, in one-letter code: UDP-3-O-acyl-N-acetylglucosamine deacetylase (306 aa).

Zn(2+) contacts are provided by H79, H238, and D242. Residue H265 is the Proton donor of the active site.

The protein belongs to the LpxC family. The cofactor is Zn(2+).

It carries out the reaction a UDP-3-O-[(3R)-3-hydroxyacyl]-N-acetyl-alpha-D-glucosamine + H2O = a UDP-3-O-[(3R)-3-hydroxyacyl]-alpha-D-glucosamine + acetate. It participates in glycolipid biosynthesis; lipid IV(A) biosynthesis; lipid IV(A) from (3R)-3-hydroxytetradecanoyl-[acyl-carrier-protein] and UDP-N-acetyl-alpha-D-glucosamine: step 2/6. Functionally, catalyzes the hydrolysis of UDP-3-O-myristoyl-N-acetylglucosamine to form UDP-3-O-myristoylglucosamine and acetate, the committed step in lipid A biosynthesis. The sequence is that of UDP-3-O-acyl-N-acetylglucosamine deacetylase from Shewanella oneidensis (strain ATCC 700550 / JCM 31522 / CIP 106686 / LMG 19005 / NCIMB 14063 / MR-1).